A 449-amino-acid polypeptide reads, in one-letter code: Adenylosuccinate synthetase (449 aa).

GTP-binding positions include 37 to 43 (GDEGKGK) and 65 to 67 (GHT). Catalysis depends on D38, which acts as the Proton acceptor. Residues D38 and G65 each coordinate Mg(2+). IMP contacts are provided by residues 38-41 (DEGK), 63-66 (NAGH), T155, R169, N247, T262, and R326. Residue H66 is the Proton donor of the active site. 322–328 (VTTKRKR) lines the substrate pocket. Residues R328, 354–356 (KLD), and 437–439 (GVG) contribute to the GTP site.

The protein belongs to the adenylosuccinate synthetase family. As to quaternary structure, homodimer. Mg(2+) is required as a cofactor.

Its subcellular location is the cytoplasm. It catalyses the reaction IMP + L-aspartate + GTP = N(6)-(1,2-dicarboxyethyl)-AMP + GDP + phosphate + 2 H(+). Its pathway is purine metabolism; AMP biosynthesis via de novo pathway; AMP from IMP: step 1/2. Plays an important role in the de novo pathway and in the salvage pathway of purine nucleotide biosynthesis. Catalyzes the first committed step in the biosynthesis of AMP from IMP. In Drosophila willistoni (Fruit fly), this protein is Adenylosuccinate synthetase.